The following is a 336-amino-acid chain: N-acetyl-gamma-glutamyl-phosphate reductase (336 aa).

Cys-156 is an active-site residue.

It belongs to the NAGSA dehydrogenase family. Type 1 subfamily.

It is found in the cytoplasm. It catalyses the reaction N-acetyl-L-glutamate 5-semialdehyde + phosphate + NADP(+) = N-acetyl-L-glutamyl 5-phosphate + NADPH + H(+). Its pathway is amino-acid biosynthesis; L-arginine biosynthesis; N(2)-acetyl-L-ornithine from L-glutamate: step 3/4. Catalyzes the NADPH-dependent reduction of N-acetyl-5-glutamyl phosphate to yield N-acetyl-L-glutamate 5-semialdehyde. This is N-acetyl-gamma-glutamyl-phosphate reductase from Moritella abyssi.